The primary structure comprises 370 residues: Cobalt-precorrin-5B C(1)-methyltransferase (370 aa).

The protein belongs to the CbiD family.

It carries out the reaction Co-precorrin-5B + S-adenosyl-L-methionine = Co-precorrin-6A + S-adenosyl-L-homocysteine. The protein operates within cofactor biosynthesis; adenosylcobalamin biosynthesis; cob(II)yrinate a,c-diamide from sirohydrochlorin (anaerobic route): step 6/10. Its function is as follows. Catalyzes the methylation of C-1 in cobalt-precorrin-5B to form cobalt-precorrin-6A. This chain is Cobalt-precorrin-5B C(1)-methyltransferase, found in Pseudomonas savastanoi pv. phaseolicola (strain 1448A / Race 6) (Pseudomonas syringae pv. phaseolicola (strain 1448A / Race 6)).